A 132-amino-acid polypeptide reads, in one-letter code: U10-hexatoxin-Hi1a (132 aa).

The first 20 residues, 1-20 (MKGFIVFSLSLCLVFTVCLA), serve as a signal peptide directing secretion. A propeptide spanning residues 21 to 30 (EDELMKEAVR) is cleaved from the precursor.

Post-translationally, contains 5 disulfide bonds. In terms of tissue distribution, expressed by the venom gland.

The protein localises to the secreted. Functionally, probable ion channel inhibitor. The polypeptide is U10-hexatoxin-Hi1a (Hadronyche infensa (Fraser island funnel-web spider)).